The chain runs to 113 residues: Hydrogenase maturation factor HypA (113 aa).

Position 2 (His-2) interacts with Ni(2+). Positions 73, 76, 89, and 92 each coordinate Zn(2+).

It belongs to the HypA/HybF family.

Functionally, involved in the maturation of [NiFe] hydrogenases. Required for nickel insertion into the metal center of the hydrogenase. This chain is Hydrogenase maturation factor HypA, found in Aeromonas hydrophila subsp. hydrophila (strain ATCC 7966 / DSM 30187 / BCRC 13018 / CCUG 14551 / JCM 1027 / KCTC 2358 / NCIMB 9240 / NCTC 8049).